Here is a 171-residue protein sequence, read N- to C-terminus: Ribosome maturation factor RimM (171 aa).

The 75-residue stretch at 96-170 (AEGEYYYHEI…LVTIHVMEGL (75 aa)) folds into the PRC barrel domain.

Belongs to the RimM family. Binds ribosomal protein uS19.

It localises to the cytoplasm. Its function is as follows. An accessory protein needed during the final step in the assembly of 30S ribosomal subunit, possibly for assembly of the head region. Essential for efficient processing of 16S rRNA. May be needed both before and after RbfA during the maturation of 16S rRNA. It has affinity for free ribosomal 30S subunits but not for 70S ribosomes. The polypeptide is Ribosome maturation factor RimM (Bacillus cereus (strain G9842)).